A 507-amino-acid chain; its full sequence is Carboxypeptidase sxa2 (507 aa).

Residues 1 to 22 form the signal peptide; sequence MLSLFLKSLFAIIIIELTIIHA. Asn38 and Asn45 each carry an N-linked (GlcNAc...) asparagine glycan. A disordered region spans residues 41–64; the sequence is SASSNQTVQPRQHAAPSSDRIKSL. Ser200 is a catalytic residue. Residues Asn259, Asn260, and Asn300 are each glycosylated (N-linked (GlcNAc...) asparagine). The active site involves Asp434. Asn448 is a glycosylation site (N-linked (GlcNAc...) asparagine). His487 is an active-site residue.

Belongs to the peptidase S10 family.

Its subcellular location is the secreted. In terms of biological role, involved in degradation or processing of the mating pheromones. Its loss causes a persistent response to the pheromones. It may be required for stabilization of enzymes that are essential for zygote formation. May degrade the mating pheromone P-factor. This is Carboxypeptidase sxa2 (sxa2) from Schizosaccharomyces pombe (strain 972 / ATCC 24843) (Fission yeast).